The following is a 254-amino-acid chain: Alcohol dehydrogenase (254 aa).

10–33 (FVAGLGGIGFDTSREIVKSGPKNL) provides a ligand contact to NAD(+). Substrate is bound at residue Ser138. The active-site Proton acceptor is the Tyr151.

It belongs to the short-chain dehydrogenases/reductases (SDR) family. Homodimer.

It carries out the reaction a primary alcohol + NAD(+) = an aldehyde + NADH + H(+). The catalysed reaction is a secondary alcohol + NAD(+) = a ketone + NADH + H(+). This chain is Alcohol dehydrogenase (Adh), found in Drosophila mayaguana (Fruit fly).